Reading from the N-terminus, the 219-residue chain is Thymidylate kinase (219 aa).

Position 7-14 (Gly7–Thr14) interacts with ATP.

Belongs to the thymidylate kinase family.

It carries out the reaction dTMP + ATP = dTDP + ADP. Phosphorylation of dTMP to form dTDP in both de novo and salvage pathways of dTTP synthesis. The protein is Thymidylate kinase of Anaplasma phagocytophilum (strain HZ).